Here is a 294-residue protein sequence, read N- to C-terminus: Cytidine deaminase (294 aa).

CMP/dCMP-type deaminase domains are found at residues D48–K168 and L186–A294. Residue N89–E91 participates in substrate binding. Zn(2+) is bound at residue H102. The active-site Proton donor is the E104. Positions 129 and 132 each coordinate Zn(2+).

This sequence belongs to the cytidine and deoxycytidylate deaminase family. In terms of assembly, homodimer. Zn(2+) is required as a cofactor.

The enzyme catalyses cytidine + H2O + H(+) = uridine + NH4(+). It catalyses the reaction 2'-deoxycytidine + H2O + H(+) = 2'-deoxyuridine + NH4(+). Functionally, this enzyme scavenges exogenous and endogenous cytidine and 2'-deoxycytidine for UMP synthesis. In Escherichia coli (strain ATCC 8739 / DSM 1576 / NBRC 3972 / NCIMB 8545 / WDCM 00012 / Crooks), this protein is Cytidine deaminase.